The following is a 670-amino-acid chain: UvrABC system protein B (670 aa).

In terms of domain architecture, Helicase ATP-binding spans 26-414 (EGLEDGLAHQ…GGDVIDQVVR (389 aa)). 39–46 (GVTGSGKT) is a binding site for ATP. The Beta-hairpin signature appears at 92-115 (YYDYYQPEAYVPSSDTFIEKDASV). In terms of domain architecture, Helicase C-terminal spans 431-597 (QVDDLLSEIR…GINKKISDIL (167 aa)). In terms of domain architecture, UVR spans 630–665 (ELKIRELESKMLTHAQNLEFEEAAALRDEVQVLRAQ).

The protein belongs to the UvrB family. As to quaternary structure, forms a heterotetramer with UvrA during the search for lesions. Interacts with UvrC in an incision complex.

It localises to the cytoplasm. In terms of biological role, the UvrABC repair system catalyzes the recognition and processing of DNA lesions. A damage recognition complex composed of 2 UvrA and 2 UvrB subunits scans DNA for abnormalities. Upon binding of the UvrA(2)B(2) complex to a putative damaged site, the DNA wraps around one UvrB monomer. DNA wrap is dependent on ATP binding by UvrB and probably causes local melting of the DNA helix, facilitating insertion of UvrB beta-hairpin between the DNA strands. Then UvrB probes one DNA strand for the presence of a lesion. If a lesion is found the UvrA subunits dissociate and the UvrB-DNA preincision complex is formed. This complex is subsequently bound by UvrC and the second UvrB is released. If no lesion is found, the DNA wraps around the other UvrB subunit that will check the other stand for damage. The protein is UvrABC system protein B of Pectobacterium atrosepticum (strain SCRI 1043 / ATCC BAA-672) (Erwinia carotovora subsp. atroseptica).